A 690-amino-acid chain; its full sequence is Copper-exporting P-type ATPase B (690 aa).

The Cytoplasmic segment spans residues M1–V64. The interval Q23–D46 is disordered. Residues H28 to D46 are compositionally biased toward basic and acidic residues. Residues S65–F85 form a helical membrane-spanning segment. Topologically, residues R86–G91 are extracellular. The helical transmembrane segment at S92–L112 threads the bilayer. The Cytoplasmic segment spans residues K113–M127. Residues T128 to L148 form a helical membrane-spanning segment. Topologically, residues K149–K151 are extracellular. A helical transmembrane segment spans residues F152–M172. Topologically, residues R173–R303 are cytoplasmic. A helical membrane pass occupies residues A304–L324. Over A325–R336 the chain is Extracellular. Residues A337–V357 form a helical membrane-spanning segment. Residues A358 to N640 lie on the Cytoplasmic side of the membrane. D389 functions as the 4-aspartylphosphate intermediate in the catalytic mechanism. Phosphate-binding positions include K390–T391, T537–G538, and K565. 2 residues coordinate Mg(2+): D583 and D587. The helical transmembrane segment at L641 to S661 threads the bilayer. Topologically, residues A662 to G663 are extracellular. Residues I664–I684 form a helical membrane-spanning segment. Residues N685 to R690 lie on the Cytoplasmic side of the membrane.

It belongs to the cation transport ATPase (P-type) (TC 3.A.3) family. Type IB subfamily.

It localises to the cell membrane. The catalysed reaction is Cu(2+)(in) + ATP + H2O = Cu(2+)(out) + ADP + phosphate + H(+). With respect to regulation, activated by Cu(2+) and to a lesser extent by Ag(+) and Cu(+). In terms of biological role, involved in copper export. The polypeptide is Copper-exporting P-type ATPase B (copB) (Archaeoglobus fulgidus (strain ATCC 49558 / DSM 4304 / JCM 9628 / NBRC 100126 / VC-16)).